The sequence spans 649 residues: ATP-dependent zinc metalloprotease FtsH (649 aa).

The Cytoplasmic portion of the chain corresponds to 1-18; sequence MQCSYPLARQLERSSALN. Residues 19–39 traverse the membrane as a helical segment; the sequence is NNLFQKAAIWLVIALVLFTVF. At 40–115 the chain is on the periplasmic side; the sequence is KQFDKPRAQD…VTGKADDEPN (76 aa). The chain crosses the membrane as a helical span at residues 116–136; sequence VLVQALYYLGPTLLIIVFWFY. Residues 137–649 are Cytoplasmic-facing; that stretch reads MMRQMQGGGK…PATARADETV (513 aa). 210–217 is a binding site for ATP; that stretch reads GPPGTGKT. His-432 contributes to the Zn(2+) binding site. Glu-433 is an active-site residue. Zn(2+) is bound by residues His-436 and Asp-508. The segment at 606 to 649 is disordered; it reads IMAGRPPRPPRGAQGPNSGGNTPPGGSPVAPTNAPATARADETV. Low complexity predominate over residues 616–626; the sequence is RGAQGPNSGGN.

This sequence in the central section; belongs to the AAA ATPase family. It in the C-terminal section; belongs to the peptidase M41 family. In terms of assembly, homohexamer. The cofactor is Zn(2+).

The protein localises to the cell inner membrane. Acts as a processive, ATP-dependent zinc metallopeptidase for both cytoplasmic and membrane proteins. Plays a role in the quality control of integral membrane proteins. This is ATP-dependent zinc metalloprotease FtsH from Cupriavidus metallidurans (strain ATCC 43123 / DSM 2839 / NBRC 102507 / CH34) (Ralstonia metallidurans).